Consider the following 58-residue polypeptide: Conotoxin Im5.4 (58 aa).

The first 18 residues, 1–18 (MRCLPVVVFLLLLLSAAA), serve as a signal peptide directing secretion. Positions 19–28 (APGVGSKTER) are excised as a propeptide.

The protein belongs to the conotoxin T superfamily. Contains 2 disulfide bonds that can be either 'C1-C3, C2-C4' or 'C1-C4, C2-C3', since these disulfide connectivities have been observed for conotoxins with cysteine framework V (for examples, see AC P0DQQ7 and AC P81755). Expressed by the venom duct.

Its subcellular location is the secreted. Functionally, probable neurotoxin. This Conus imperialis (Imperial cone) protein is Conotoxin Im5.4.